The primary structure comprises 263 residues: Lens fiber major intrinsic protein (263 aa).

Over 1–12 the chain is Cytoplasmic; that stretch reads MWELRSASFWRA. A helical transmembrane segment spans residues 13-30; that stretch reads IFAEFFATLFYVFFGLGA. The Extracellular segment spans residues 31–40; that stretch reads SLRWAPGPLH. Residues 41 to 59 form a helical membrane-spanning segment; it reads VLQVALAFGLALATLVQAV. Topologically, residues 60-63 are cytoplasmic; sequence GHIS. An intramembrane region (discontinuously helical) is located at residues 64 to 76; the sequence is GAHVNPAVTFAFL. Positions 68-70 match the NPA 1 motif; the sequence is NPA. The Cytoplasmic portion of the chain corresponds to 77-85; the sequence is VGSQMSLLR. The helical transmembrane segment at 86 to 106 threads the bilayer; that stretch reads AICYVVAQLLGAVAGAAVLYS. The Extracellular portion of the chain corresponds to 107 to 126; sequence VTPPAVRGNLALNTLHPGVS. Residues 127 to 147 form a helical membrane-spanning segment; that stretch reads VGQATIVEIFLTLQFVLCIFA. Topologically, residues 148 to 157 are cytoplasmic; sequence TYDERRNGRL. The chain crosses the membrane as a helical span at residues 158–175; that stretch reads GSVALAVGFSLTLGHLFG. Topologically, residues 176–177 are extracellular; that stretch reads MY. The segment at residues 178–193 is an intramembrane region (discontinuously helical); it reads YTGAGMNPARSFAPAI. Positions 184–186 match the NPA 2 motif; sequence NPA. Residues 194 to 200 are Extracellular-facing; it reads LTRNFTN. The helical transmembrane segment at 201 to 218 threads the bilayer; sequence HWVYWVGPVIGAGLGSLL. Topologically, residues 219-263 are cytoplasmic; the sequence is YDFLLFPRLKSVSERLSILKGTRPSESNGQPEVTGEPVELKTQAL. The interval 227–237 is interaction with CALM; sequence LKSVSERLSIL. A phosphoserine mark is found at serine 235, serine 243, and serine 245. The disordered stretch occupies residues 240–263; that stretch reads TRPSESNGQPEVTGEPVELKTQAL.

The protein belongs to the MIP/aquaporin (TC 1.A.8) family. As to quaternary structure, homotetramer; each monomer provides an independent water pore. Two homotetramers on opposing membranes can dimerize, forming a cell-cell junction. Interacts with CALM; the calcium-calmodulin/CALM complex interacts with the cytoplasmic domains of two aquaporins, leading to channel closure. Interacts with BFSP1 (via C-terminus); prevents calcium-dependent inhibition of the water channel activity. Post-translationally, subject to partial proteolytic cleavage in the eye lens core. Partial proteolysis promotes interactions between tetramers from adjoining membranes. Fatty acylated at Met-1 and Lys-238. The acyl modifications, in decreasing order of ion abundance, are: oleoyl (C18:1) &gt; palmitoyl (C16:0) &gt; stearoyl (C18:0) &gt; eicosenoyl (C20:1) &gt; dihomo-gamma-linolenoyl (C20:3) &gt; palmitoleoyl (C16:1) &gt; eicosadienoyl (C20:2). Detected in eye lens (at protein level).

Its subcellular location is the cell membrane. The protein resides in the cell junction. It carries out the reaction H2O(in) = H2O(out). Its activity is regulated as follows. The water channel activity is inhibited by calcium through calmodulin/CALM. In terms of biological role, aquaporins form homotetrameric transmembrane channels, with each monomer independently mediating water transport across the plasma membrane along its osmotic gradient. Specifically expressed in lens fiber cells, this aquaporin is crucial for maintaining lens water homeostasis and transparency. Beyond water permeability, it also acts as a cell-to-cell adhesion molecule, forming thin junctions between lens fiber cells that are essential for maintaining the ordered structure and transparency of the lens. The protein is Lens fiber major intrinsic protein of Ovis aries (Sheep).